The following is a 380-amino-acid chain: Flap endonuclease 1-A (380 aa).

An N-domain region spans residues 1–105; it reads MGIKGLTKLL…EELAKRFSKR (105 aa). Position 34 (Asp-34) interacts with Mg(2+). Arg-71 contributes to the DNA binding site. Residues Asp-87, Glu-159, Glu-161, Asp-180, and Asp-182 each coordinate Mg(2+). An I-domain region spans residues 123 to 254; that stretch reads AVEKLSKRTV…QTALKLIRQH (132 aa). Glu-159 contributes to the DNA binding site. Residues Gly-232 and Asp-234 each coordinate DNA. Mg(2+) is bound at residue Asp-234. Positions 336 to 344 are interaction with PCNA; that stretch reads SQGRLESFF. Residues 351-380 are disordered; sequence SAPLKRKETSDKTSKAAAANKKTKAGGKKK. The span at 355–364 shows a compositional bias: basic and acidic residues; sequence KRKETSDKTS. Residues 371–380 are compositionally biased toward basic residues; that stretch reads KKTKAGGKKK.

Belongs to the XPG/RAD2 endonuclease family. FEN1 subfamily. As to quaternary structure, interacts with PCNA. Three molecules of FEN1 bind to one PCNA trimer with each molecule binding to one PCNA monomer. PCNA stimulates the nuclease activity without altering cleavage specificity. Requires Mg(2+) as cofactor. Post-translationally, phosphorylated. Phosphorylation upon DNA damage induces relocalization to the nuclear plasma.

The protein resides in the nucleus. The protein localises to the nucleolus. It localises to the nucleoplasm. Its subcellular location is the mitochondrion. Functionally, structure-specific nuclease with 5'-flap endonuclease and 5'-3' exonuclease activities involved in DNA replication and repair. During DNA replication, cleaves the 5'-overhanging flap structure that is generated by displacement synthesis when DNA polymerase encounters the 5'-end of a downstream Okazaki fragment. It enters the flap from the 5'-end and then tracks to cleave the flap base, leaving a nick for ligation. Also involved in the long patch base excision repair (LP-BER) pathway, by cleaving within the apurinic/apyrimidinic (AP) site-terminated flap. Acts as a genome stabilization factor that prevents flaps from equilibrating into structures that lead to duplications and deletions. Also possesses 5'-3' exonuclease activity on nicked or gapped double-stranded DNA, and exhibits RNase H activity. Also involved in replication and repair of rDNA and in repairing mitochondrial DNA. The chain is Flap endonuclease 1-A from Sorghum bicolor (Sorghum).